We begin with the raw amino-acid sequence, 370 residues long: 3-isopropylmalate dehydrogenase (370 aa).

77–90 (GPKWDAVPYDARPE) serves as a coordination point for NAD(+). Residues R97, R107, R135, and D226 each coordinate substrate. Positions 226, 250, and 254 each coordinate Mg(2+). An NAD(+)-binding site is contributed by 290–302 (GSAPDIAGKGLAN).

Belongs to the isocitrate and isopropylmalate dehydrogenases family. LeuB type 1 subfamily. In terms of assembly, homodimer. Mg(2+) serves as cofactor. Mn(2+) is required as a cofactor.

The protein localises to the cytoplasm. The enzyme catalyses (2R,3S)-3-isopropylmalate + NAD(+) = 4-methyl-2-oxopentanoate + CO2 + NADH. The protein operates within amino-acid biosynthesis; L-leucine biosynthesis; L-leucine from 3-methyl-2-oxobutanoate: step 3/4. Its function is as follows. Catalyzes the oxidation of 3-carboxy-2-hydroxy-4-methylpentanoate (3-isopropylmalate) to 3-carboxy-4-methyl-2-oxopentanoate. The product decarboxylates to 4-methyl-2 oxopentanoate. This Rhodopseudomonas palustris (strain HaA2) protein is 3-isopropylmalate dehydrogenase.